The primary structure comprises 253 residues: Pimeloyl-[acyl-carrier protein] methyl ester esterase (253 aa).

Substrate-binding positions include tryptophan 18, 78 to 79, and 139 to 143; these read SL and FLALD. The active-site Nucleophile is serine 78. Catalysis depends on residues aspartate 203 and histidine 231. Residue histidine 231 participates in substrate binding.

The protein belongs to the AB hydrolase superfamily. Carboxylesterase BioH family. Monomer.

It localises to the cytoplasm. It catalyses the reaction 6-carboxyhexanoyl-[ACP] methyl ester + H2O = 6-carboxyhexanoyl-[ACP] + methanol + H(+). The protein operates within cofactor biosynthesis; biotin biosynthesis. In terms of biological role, the physiological role of BioH is to remove the methyl group introduced by BioC when the pimeloyl moiety is complete. It allows to synthesize pimeloyl-ACP via the fatty acid synthetic pathway through the hydrolysis of the ester bonds of pimeloyl-ACP esters. This chain is Pimeloyl-[acyl-carrier protein] methyl ester esterase, found in Xanthomonas axonopodis pv. citri (strain 306).